The primary structure comprises 466 residues: Argininosuccinate lyase (466 aa).

This sequence belongs to the lyase 1 family. Argininosuccinate lyase subfamily.

Its subcellular location is the cytoplasm. It carries out the reaction 2-(N(omega)-L-arginino)succinate = fumarate + L-arginine. The protein operates within amino-acid biosynthesis; L-arginine biosynthesis; L-arginine from L-ornithine and carbamoyl phosphate: step 3/3. The sequence is that of Argininosuccinate lyase from Syntrophobacter fumaroxidans (strain DSM 10017 / MPOB).